The chain runs to 249 residues: MKFDILTLFPAMFEGPLTESILKRASEKGLIEVALHNIRDWAFDKHATADDAPYGGGAGMVMKVEPIAGAIEAVKAKRPNSKVVLTTPCGRPFNHQVAEELSREEGVVIICGRYEGVDERVRTLCVDDEISLGDFVLTGGEIAAMVIVDAVSRLVPGVLGSDESAQYDSFADGLLEYPQYTRPPEFRGEKVPDILLSGNHAEIAKWRRKEQMKRTLASRPELLDGIEWSKADKKLFAEVEKADQEKVAR.

Residues G112 and 132-137 each bind S-adenosyl-L-methionine; that span reads LGDFVL.

Belongs to the RNA methyltransferase TrmD family. In terms of assembly, homodimer.

It localises to the cytoplasm. The catalysed reaction is guanosine(37) in tRNA + S-adenosyl-L-methionine = N(1)-methylguanosine(37) in tRNA + S-adenosyl-L-homocysteine + H(+). In terms of biological role, specifically methylates guanosine-37 in various tRNAs. This Geobacter sp. (strain M21) protein is tRNA (guanine-N(1)-)-methyltransferase.